The primary structure comprises 36 residues: U14-myrmicitoxin-Tb1a (36 aa).

An N-terminal signal peptide occupies residues 1–23 (MKIIKLITIFTMMATLMXXVANG). Residues 24–25 (EP) constitute a propeptide that is removed on maturation. Glutamine 35 carries the glutamine amide modification.

As to expression, expressed by the venom gland.

The protein resides in the secreted. Venom protein with unknown function. Does not induce paralysis when a high dose is administered by intrathoracic injection into the blowfly Lucilia caesar. This is U14-myrmicitoxin-Tb1a from Tetramorium bicarinatum (Tramp ant).